The sequence spans 295 residues: Bifunctional protein FolD (295 aa).

Residues 164–166 (GRS), Ser-193, and Ile-234 contribute to the NADP(+) site.

This sequence belongs to the tetrahydrofolate dehydrogenase/cyclohydrolase family. Homodimer.

It catalyses the reaction (6R)-5,10-methylene-5,6,7,8-tetrahydrofolate + NADP(+) = (6R)-5,10-methenyltetrahydrofolate + NADPH. It carries out the reaction (6R)-5,10-methenyltetrahydrofolate + H2O = (6R)-10-formyltetrahydrofolate + H(+). Its pathway is one-carbon metabolism; tetrahydrofolate interconversion. Its function is as follows. Catalyzes the oxidation of 5,10-methylenetetrahydrofolate to 5,10-methenyltetrahydrofolate and then the hydrolysis of 5,10-methenyltetrahydrofolate to 10-formyltetrahydrofolate. The polypeptide is Bifunctional protein FolD (Flavobacterium johnsoniae (strain ATCC 17061 / DSM 2064 / JCM 8514 / BCRC 14874 / CCUG 350202 / NBRC 14942 / NCIMB 11054 / UW101) (Cytophaga johnsonae)).